The sequence spans 201 residues: Small ribosomal subunit protein uS4 (201 aa).

The disordered stretch occupies residues 28 to 47 (KKNYPPGQHGNSRKRKTSEY). Residues 92 to 155 (GRLDNIVFRL…KSLEVIANSL (64 aa)) form the S4 RNA-binding domain.

The protein belongs to the universal ribosomal protein uS4 family. Part of the 30S ribosomal subunit. Contacts protein S5. The interaction surface between S4 and S5 is involved in control of translational fidelity.

In terms of biological role, one of the primary rRNA binding proteins, it binds directly to 16S rRNA where it nucleates assembly of the body of the 30S subunit. Functionally, with S5 and S12 plays an important role in translational accuracy. This is Small ribosomal subunit protein uS4 from Bacteroides fragilis (strain YCH46).